A 956-amino-acid polypeptide reads, in one-letter code: Angiomotin-like protein 1 (956 aa).

The interval 197-246 (QSQFFRGQQQQQQQQGAVGHGYYMAGGTSQKSRTEGRPTVNRANSGQAHK) is disordered. Phosphoserine is present on residues Ser-241 and Ser-269. The stretch at 259–279 (RSLSERIMQLSLERNGAKQHL) forms a coiled coil. Disordered regions lie at residues 274–322 (GAKQ…QMMS), 382–405 (PSTM…LHSV), and 411–430 (LPMA…SQQL). The segment covering 282–294 (SGNGKGFKVGGGP) has biased composition (gly residues). The residue at position 295 (Ser-295) is a Phosphoserine. Polar residues predominate over residues 382–398 (PSTMQQHSPMSSQTSSA). Coiled coils occupy residues 438–639 (VERA…WLER) and 665–694 (ALLE…YLEE). A Phosphoserine modification is found at Ser-720. The stretch at 729 to 762 (SLEAHIWQEEEEVVQANRRCQDMEYTIKNLHAKI) forms a coiled coil. Residues 773–823 (QQRSRKDAGKTDSSSLRPARSVPSIAAATGTHSRQTSLTSSQLAEEKKEEK) are disordered. Residues Ser-793, Ser-805, and Ser-828 each carry the phosphoserine modification. Residues 802 to 815 (GTHSRQTSLTSSQL) show a composition bias toward polar residues. Disordered regions lie at residues 841–880 (ASAP…TQTD) and 894–944 (PSRG…LHKP). The segment covering 852 to 866 (SALSSIASTTAASSA) has biased composition (low complexity). Position 900 is a phosphoserine (Ser-900). Phosphothreonine is present on Thr-902. The residue at position 906 (Ser-906) is a Phosphoserine. Residues 953–956 (EVLI) carry the PDZ-binding motif.

Belongs to the angiomotin family. Post-translationally, polyubiquitinated by NEDD4, leading to proteasomal degradation.

The protein resides in the cell junction. Its subcellular location is the tight junction. Its function is as follows. Inhibits the Wnt/beta-catenin signaling pathway, probably by recruiting CTNNB1 to recycling endosomes and hence preventing its translocation to the nucleus. This is Angiomotin-like protein 1 (AMOTL1) from Homo sapiens (Human).